A 380-amino-acid chain; its full sequence is Glutamyl-tRNA reductase 1 (380 aa).

Residues 42 to 45, serine 93, 98 to 100, and glutamine 104 each bind substrate; these read TCNR and ETD. The Nucleophile role is filled by cysteine 43. 172–177 provides a ligand contact to NADP(+); it reads GAGAVG.

Belongs to the glutamyl-tRNA reductase family. As to quaternary structure, homodimer.

The catalysed reaction is (S)-4-amino-5-oxopentanoate + tRNA(Glu) + NADP(+) = L-glutamyl-tRNA(Glu) + NADPH + H(+). It functions in the pathway porphyrin-containing compound metabolism; protoporphyrin-IX biosynthesis; 5-aminolevulinate from L-glutamyl-tRNA(Glu): step 1/2. In terms of biological role, catalyzes the NADPH-dependent reduction of glutamyl-tRNA(Glu) to glutamate 1-semialdehyde (GSA). The chain is Glutamyl-tRNA reductase 1 from Pyrobaculum calidifontis (strain DSM 21063 / JCM 11548 / VA1).